A 263-amino-acid chain; its full sequence is 4-hydroxy-tetrahydrodipicolinate reductase (263 aa).

Residues 8 to 13, Asp-34, 99 to 101, and 125 to 128 contribute to the NAD(+) site; these read GACGRM, GTT, and SPNY. Catalysis depends on His-157, which acts as the Proton donor/acceptor. Residue His-158 participates in (S)-2,3,4,5-tetrahydrodipicolinate binding. Lys-161 acts as the Proton donor in catalysis. 167–168 contributes to the (S)-2,3,4,5-tetrahydrodipicolinate binding site; sequence GT.

Belongs to the DapB family.

The protein resides in the cytoplasm. The catalysed reaction is (S)-2,3,4,5-tetrahydrodipicolinate + NAD(+) + H2O = (2S,4S)-4-hydroxy-2,3,4,5-tetrahydrodipicolinate + NADH + H(+). It carries out the reaction (S)-2,3,4,5-tetrahydrodipicolinate + NADP(+) + H2O = (2S,4S)-4-hydroxy-2,3,4,5-tetrahydrodipicolinate + NADPH + H(+). Its pathway is amino-acid biosynthesis; L-lysine biosynthesis via DAP pathway; (S)-tetrahydrodipicolinate from L-aspartate: step 4/4. Functionally, catalyzes the conversion of 4-hydroxy-tetrahydrodipicolinate (HTPA) to tetrahydrodipicolinate. The polypeptide is 4-hydroxy-tetrahydrodipicolinate reductase (Methanosarcina mazei (strain ATCC BAA-159 / DSM 3647 / Goe1 / Go1 / JCM 11833 / OCM 88) (Methanosarcina frisia)).